The sequence spans 347 residues: MSVAGLKKQFHKASQLFSEKISGAEGTKLDEEFLNMEKKIDITSKAVAEILSKATEYLQPNPAYRAKLGMLNTVSKLRGQVKATGYPQTEGLLGDCMLKYGKELGEDSAFGNSLVDVGEALKLMAEVKDSLDINVKQTFIDPLQLLQDKDLKEIGHHLRKLEGRRLDYDYKKRRVGKIPEEEIRQAVEKFEESKELAERSMFNFLENDVEQVSQLAVFVEAALDYHRQSTEILQELQSKLELRISLASKVPKREFMPKPVNMSSTDANGVGPSSSSKTPGTDTPADQPCCRGLYDFEPENEGELGFKEGDIITLTNQIDENWYEGMLRGESGFFPINYVEVIVPLPP.

The interval 1–21 (MSVAGLKKQFHKASQLFSEKI) is membrane-binding amphipathic helix. One can recognise a BAR domain in the interval 18-249 (SEKISGAEGT…LELRISLASK (232 aa)). Positions 60–87 (PNPAYRAKLGMLNTVSKLRGQVKATGYP) are required for dimerization upon membrane association. Positions 180 to 201 (EEEIRQAVEKFEESKELAERSM) form a coiled coil. An interaction with ARC region spans residues 218–254 (FVEAALDYHRQSTEILQELQSKLELRISLASKVPKRE). The disordered stretch occupies residues 255-288 (FMPKPVNMSSTDANGVGPSSSSKTPGTDTPADQP). Positions 261 to 281 (NMSSTDANGVGPSSSSKTPGT) are enriched in polar residues. In terms of domain architecture, SH3 spans 285–344 (ADQPCCRGLYDFEPENEGELGFKEGDIITLTNQIDENWYEGMLRGESGFFPINYVEVIVP).

The protein belongs to the endophilin family. As to quaternary structure, interacts with ARC, DNM1, SGIP1, SYNJ1 and DYDC1. Interacts with FASLG. Interacts with ATXN2. Interacts with BIN2.

The protein resides in the cytoplasm. Its subcellular location is the early endosome membrane. Its function is as follows. Implicated in endocytosis. May recruit other proteins to membranes with high curvature. This chain is Endophilin-A3 (Sh3gl3), found in Mus musculus (Mouse).